The primary structure comprises 326 residues: Elongation factor Ts (326 aa).

The segment at 80 to 83 is involved in Mg(2+) ion dislocation from EF-Tu; the sequence is TDFV.

It belongs to the EF-Ts family.

The protein localises to the cytoplasm. Functionally, associates with the EF-Tu.GDP complex and induces the exchange of GDP to GTP. It remains bound to the aminoacyl-tRNA.EF-Tu.GTP complex up to the GTP hydrolysis stage on the ribosome. In Rhodopirellula baltica (strain DSM 10527 / NCIMB 13988 / SH1), this protein is Elongation factor Ts.